The chain runs to 325 residues: Myo-inositol dehydrogenase Hyg17 (325 aa).

Belongs to the Gfo/Idh/MocA family.

The enzyme catalyses myo-inositol + NAD(+) = myo-inosose-5 + NADH + H(+). It functions in the pathway antibiotic biosynthesis. Its function is as follows. Dehydrogenase involved in the biosynthesis of the aminocyclitol moiety of hygromycin A, a broad-spectrum antibiotic. Catalyzes the NAD(+)-dependent oxidation of myo-inositol to myo-inosose-5 (neo-inosose). Shows reduced activity with scyllo-inositol, minimal activity with L-chiro-inositol and no activity with D-glucose, D-chiro-inositol, epi-inositol, muco-inositol and allo-inositol. Is specific for NAD(+) and cannot use NADP(+). This chain is Myo-inositol dehydrogenase Hyg17, found in Streptomyces leeuwenhoekii.